We begin with the raw amino-acid sequence, 1105 residues long: Lysylphosphatidylglycerol biosynthesis bifunctional protein LysX (1105 aa).

Residues 1-603 (MTVTKPRSVQ…LLHHDGSAPD (603 aa)) form a phosphatidylglycerol lysyltransferase region. Transmembrane regions (helical) follow at residues 20–40 (VPAA…LASI), 62–82 (FPDT…ALAA), 86–106 (IAWL…AADI), 117–137 (FGEN…VLGY), 154–174 (AVLV…VDLF), 186–203 (YVAN…DLFT), and 208–228 (VFLN…ATIV). The tract at residues 604-1105 (VSGLRQSAIA…TLPFPLAKPH (502 aa)) is lysine--tRNA ligase. 2 residues coordinate Mg(2+): D1017 and E1024.

This sequence in the N-terminal section; belongs to the LPG synthetase family. In the C-terminal section; belongs to the class-II aminoacyl-tRNA synthetase family. Mg(2+) is required as a cofactor.

It is found in the cell membrane. It carries out the reaction tRNA(Lys) + L-lysine + ATP = L-lysyl-tRNA(Lys) + AMP + diphosphate. The enzyme catalyses L-lysyl-tRNA(Lys) + a 1,2-diacyl-sn-glycero-3-phospho-(1'-sn-glycerol) = a 1,2-diacyl-sn-glycero-3-phospho-1'-(3'-O-L-lysyl)-sn-glycerol + tRNA(Lys). Its function is as follows. Catalyzes the production of L-lysyl-tRNA(Lys)transfer and the transfer of a lysyl group from L-lysyl-tRNA(Lys) to membrane-bound phosphatidylglycerol (PG), which produces lysylphosphatidylglycerol (LPG), one of the components of the bacterial membrane with a positive net charge. LPG synthesis contributes to the resistance to cationic antimicrobial peptides (CAMPs) and likely protects M.tuberculosis against the CAMPs produced by competiting microorganisms (bacteriocins). In fact, the modification of anionic phosphatidylglycerol with positively charged L-lysine results in repulsion of the peptides. The protein is Lysylphosphatidylglycerol biosynthesis bifunctional protein LysX (lysX) of Mycobacterium ulcerans (strain Agy99).